A 304-amino-acid polypeptide reads, in one-letter code: Ferrochelatase (304 aa).

2 residues coordinate Fe cation: His-169 and Glu-241.

It belongs to the ferrochelatase family.

It localises to the cytoplasm. It carries out the reaction heme b + 2 H(+) = protoporphyrin IX + Fe(2+). It functions in the pathway porphyrin-containing compound metabolism; protoheme biosynthesis; protoheme from protoporphyrin-IX: step 1/1. In terms of biological role, catalyzes the ferrous insertion into protoporphyrin IX. The polypeptide is Ferrochelatase (Thermoplasma volcanium (strain ATCC 51530 / DSM 4299 / JCM 9571 / NBRC 15438 / GSS1)).